Here is a 103-residue protein sequence, read N- to C-terminus: Movement protein TGB2 (103 aa).

The Cytoplasmic portion of the chain corresponds to 1-8; it reads MSFAPPPD. The helical transmembrane segment at 9–29 threads the bilayer; that stretch reads YSKIYLALGCGLGLGFVVYAS. At 30–70 the chain is on the lumenal side; sequence RVNHLPHVGDNTHNLPHGGQYCDGNKRVLYSGPKSGSSPTN. A helical transmembrane segment spans residues 71 to 91; sequence NLWPFITVIALTLAILLTSCP. Over 92 to 103 the chain is Cytoplasmic; that stretch reads RRRVCIRCSQHH.

This sequence belongs to the Tymovirales TGBp2 protein family.

It is found in the host endoplasmic reticulum membrane. Its function is as follows. Plays a role in viral cell-to-cell propagation, by facilitating genome transport to neighboring plant cells through plasmosdesmata,. This chain is Movement protein TGB2, found in Allium cepa var. aggregatum (Shallot).